Here is a 343-residue protein sequence, read N- to C-terminus: Heat-inducible transcription repressor HrcA (343 aa).

Belongs to the HrcA family.

Its function is as follows. Negative regulator of class I heat shock genes (grpE-dnaK-dnaJ and groELS operons). Prevents heat-shock induction of these operons. The sequence is that of Heat-inducible transcription repressor HrcA from Mycolicibacterium paratuberculosis (strain ATCC BAA-968 / K-10) (Mycobacterium paratuberculosis).